The sequence spans 445 residues: tRNA modification GTPase MnmE (445 aa).

(6S)-5-formyl-5,6,7,8-tetrahydrofolate-binding residues include Arg20, Glu79, and Lys119. Residues 215-371 (GLKLAIIGPP…ILKNIENIAE (157 aa)) form the TrmE-type G domain. Asn225 lines the K(+) pocket. Residues 225–230 (NAGKSS), 244–250 (SNIAGTT), and 269–272 (DTAG) contribute to the GTP site. Ser229 serves as a coordination point for Mg(2+). Residues Ser244, Ile246, and Thr249 each contribute to the K(+) site. Residue Thr250 participates in Mg(2+) binding. Lys445 contributes to the (6S)-5-formyl-5,6,7,8-tetrahydrofolate binding site.

It belongs to the TRAFAC class TrmE-Era-EngA-EngB-Septin-like GTPase superfamily. TrmE GTPase family. As to quaternary structure, homodimer. Heterotetramer of two MnmE and two MnmG subunits. K(+) is required as a cofactor.

Its subcellular location is the cytoplasm. In terms of biological role, exhibits a very high intrinsic GTPase hydrolysis rate. Involved in the addition of a carboxymethylaminomethyl (cmnm) group at the wobble position (U34) of certain tRNAs, forming tRNA-cmnm(5)s(2)U34. In Rickettsia canadensis (strain McKiel), this protein is tRNA modification GTPase MnmE.